The following is a 349-amino-acid chain: Anthranilate phosphoribosyltransferase (349 aa).

5-phospho-alpha-D-ribose 1-diphosphate-binding positions include glycine 81, 84-85, threonine 89, 91-94, 109-117, and alanine 121; these read GD, NVST, and KHGNRAASS. Glycine 81 provides a ligand contact to anthranilate. Serine 93 provides a ligand contact to Mg(2+). Asparagine 112 contacts anthranilate. Arginine 167 lines the anthranilate pocket. Residues aspartate 226 and glutamate 227 each contribute to the Mg(2+) site.

It belongs to the anthranilate phosphoribosyltransferase family. Homodimer. It depends on Mg(2+) as a cofactor.

The catalysed reaction is N-(5-phospho-beta-D-ribosyl)anthranilate + diphosphate = 5-phospho-alpha-D-ribose 1-diphosphate + anthranilate. It participates in amino-acid biosynthesis; L-tryptophan biosynthesis; L-tryptophan from chorismate: step 2/5. Functionally, catalyzes the transfer of the phosphoribosyl group of 5-phosphorylribose-1-pyrophosphate (PRPP) to anthranilate to yield N-(5'-phosphoribosyl)-anthranilate (PRA). This is Anthranilate phosphoribosyltransferase from Methylocella silvestris (strain DSM 15510 / CIP 108128 / LMG 27833 / NCIMB 13906 / BL2).